We begin with the raw amino-acid sequence, 60 residues long: Large ribosomal subunit protein bL32 (60 aa).

The interval 1-36 is disordered; it reads MAVQQNKKSPSKRGMHRSHNALNTPGLAIEPTTGET. Over residues 9–19 the composition is skewed to basic residues; sequence SPSKRGMHRSH.

The protein belongs to the bacterial ribosomal protein bL32 family.

The sequence is that of Large ribosomal subunit protein bL32 from Methylibium petroleiphilum (strain ATCC BAA-1232 / LMG 22953 / PM1).